The following is a 353-amino-acid chain: uncharacterized protein (353 aa).

The next 9 helical transmembrane spans lie at 16-36 (AAYIIGFSFLAVSIILGISCG), 77-97 (VVLAALVGAALSIAGAAFQGL), 106-128 (YTLGVSSGASVGAVVTLFLGLHL), 140-160 (SVAAALATMAAVLFFSRLVHA), 167-187 (LILTGVITNSFLGAFISLIIA), 208-228 (GWSYVILFLPFFLLGTILLII), 263-283 (LLTGSAVAVSGTIGFVGLVIP), 296-316 (HLLPLSALLGAGFLVLADLLS), and 323-343 (IELPIGIITSLAGAPVFALIL).

The protein belongs to the binding-protein-dependent transport system permease family. FecCD subfamily. As to quaternary structure, the complex is composed of two ATP-binding proteins (YvrA), two transmembrane proteins (YvrB) and a solute-binding protein (YvrC).

It localises to the cell membrane. In terms of biological role, probably part of an ABC transporter complex. Probably responsible for the translocation of the substrate across the membrane. This is an uncharacterized protein from Bacillus subtilis (strain 168).